The sequence spans 363 residues: Neurogenic differentiation factor 2 (363 aa).

Residues 1 to 116 are disordered; sequence MLTRLFKEPS…VRRQKANARE (116 aa). Positions 28–44 are enriched in basic and acidic residues; sequence EDSKTKDEEQERCRLGD. Positions 64-83 are enriched in acidic residues; that stretch reads AGEEDYDEDVDEDDCGEEGD. The span at 87 to 98 shows a compositional bias: basic residues; the sequence is PKKRGPKKRKMT. A Nuclear localization signal motif is present at residues 93–99; that stretch reads KKRKMTP. In terms of domain architecture, bHLH spans 107-159; sequence VRRQKANARERTRMHDLNSALDNLLKVVPCYSKTQKLSKIETLRLAKNYIWAL.

In terms of assembly, efficient DNA binding requires dimerization with another bHLH protein. As to expression, in adult, expressed strongly in brain and more weakly in skin, muscle, eye and ovary.

The protein localises to the nucleus. Its function is as follows. Transcriptional regulator. Appears to mediate neuronal differentiation. The protein is Neurogenic differentiation factor 2 of Danio rerio (Zebrafish).